Reading from the N-terminus, the 165-residue chain is Probable chemoreceptor glutamine deamidase CheD (165 aa).

It belongs to the CheD family.

The enzyme catalyses L-glutaminyl-[protein] + H2O = L-glutamyl-[protein] + NH4(+). Functionally, probably deamidates glutamine residues to glutamate on methyl-accepting chemotaxis receptors (MCPs), playing an important role in chemotaxis. The chain is Probable chemoreceptor glutamine deamidase CheD from Geobacillus kaustophilus (strain HTA426).